Here is a 327-residue protein sequence, read N- to C-terminus: Metapyrocatechase (327 aa).

2 consecutive VOC domains span residues 14-126 (QLAH…IFFE) and 156-276 (RLDH…LFGD). His159, His221, and Glu272 together coordinate Fe cation.

Belongs to the extradiol ring-cleavage dioxygenase family. Requires Fe(2+) as cofactor.

The catalysed reaction is catechol + O2 = (2Z,4E)-2-hydroxy-6-oxohexa-2,4-dienoate + H(+). In Geobacillus stearothermophilus (Bacillus stearothermophilus), this protein is Metapyrocatechase (pheB).